The following is a 161-amino-acid chain: SsrA-binding protein (161 aa).

This sequence belongs to the SmpB family.

It localises to the cytoplasm. Functionally, required for rescue of stalled ribosomes mediated by trans-translation. Binds to transfer-messenger RNA (tmRNA), required for stable association of tmRNA with ribosomes. tmRNA and SmpB together mimic tRNA shape, replacing the anticodon stem-loop with SmpB. tmRNA is encoded by the ssrA gene; the 2 termini fold to resemble tRNA(Ala) and it encodes a 'tag peptide', a short internal open reading frame. During trans-translation Ala-aminoacylated tmRNA acts like a tRNA, entering the A-site of stalled ribosomes, displacing the stalled mRNA. The ribosome then switches to translate the ORF on the tmRNA; the nascent peptide is terminated with the 'tag peptide' encoded by the tmRNA and targeted for degradation. The ribosome is freed to recommence translation, which seems to be the essential function of trans-translation. The chain is SsrA-binding protein from Desulforamulus reducens (strain ATCC BAA-1160 / DSM 100696 / MI-1) (Desulfotomaculum reducens).